The following is a 2301-amino-acid chain: Genome polyprotein (2301 aa).

A zinc finger lies at 3–14; it reads CKHGYPDVCPIC. The interval 30-46 is acidic; that stretch reads DGEWFPTDLLCVDLDDD. Residues 60–73 are theilo; the sequence is MEWTDLPLVRDIVM. A lipid anchor (N-myristoyl glycine; by host) is attached at glycine 77. Cysteine 501 and cysteine 503 are oxidised to a cystine. The interval 1039 to 1045 is host EIF4E binding; it reads YYKQRLI. An SF3 helicase domain is found at 1281-1446; sequence IPLASLCEKF…CTTSNGMLDI (166 aa). 1310 to 1317 contacts ATP; the sequence is GAAGQGKS. Tyrosine 1606 bears the O-(5'-phospho-RNA)-tyrosine mark. Positions 1634–1827 constitute a Peptidase C3 domain; the sequence is NPVMDFELFC…AATIITRELI (194 aa). Residues histidine 1678, aspartate 1712, and cysteine 1791 each act as for protease 3C activity in the active site. Residues 2069–2187 form the RdRp catalytic domain; sequence NYVYDVDYSN…GTNYQIDFNL (119 aa). Residues aspartate 2075 and aspartate 2173 each act as for RdRp activity in the active site.

Belongs to the picornaviruses polyprotein family. As to quaternary structure, interacts with host EIF4E. Interacts with the leader protein. In terms of assembly, interacts with host RAN; the complex L-RAN recruits cellular kinases responsible for the L-induced nucleocytoplasmic trafficking inhibition. The complex L-RAN can further bind to the host exportins XPO1/CRM1 and CSE1L/CAS. Interacts with the protein 2A. Interacts with host RNASEL; this interaction prevents RNASEL activation by its substrate 2'-5' oligoadenylates. Phosphorylated. Post-translationally, specific enzymatic cleavages by the viral protease in vivo yield a variety of precursors and mature proteins. The polyprotein seems to be cotranslationally cleaved at the 2A/2B junction by a ribosomal skip from one codon to the next without formation of a peptide bond. This process would release the P1-2A peptide from the translational complex. In terms of processing, during virion maturation, immature virions are rendered infectious following cleavage of VP0 into VP4 and VP2. This maturation seems to be an autocatalytic event triggered by the presence of RNA in the capsid and is followed by a conformational change of the particle. Uridylylated by the polymerase and is covalently linked to the 5'-end of genomic RNA. This uridylylated form acts as a nucleotide-peptide primer for the polymerase. Post-translationally, myristoylation is required during RNA encapsidation and formation of the mature virus particle.

Its subcellular location is the virion. The protein resides in the host cytoplasm. It localises to the host nucleus. The protein localises to the host nucleolus. It is found in the host cytoplasmic vesicle membrane. The catalysed reaction is RNA(n) + a ribonucleoside 5'-triphosphate = RNA(n+1) + diphosphate. The enzyme catalyses ATP + H2O = ADP + phosphate + H(+). It catalyses the reaction Selective cleavage of Gln-|-Gly bond in the poliovirus polyprotein. In other picornavirus reactions Glu may be substituted for Gln, and Ser or Thr for Gly.. In terms of biological role, forms a complex with host RAN and probably binds to exportins carrying activated MAPK in order to mediate the hyperphosphorylation of host Phe/Gly containing nuclear pore proteins (Nups) resulting in cessation of active nucleocytoplasmic transport. Proteins with NLS signals fail to import, cellular mRNAs fail to export, and some proteins small enough for diffusion are not retained anymore (efflux). The resulting inhibition of cellular protein synthesis serves to ensure maximal viral gene expression and to evade host immune response. The leader protein also inhibits host interferon regulatory factor 3 (IRF3) dimerization, thereby blocking the transcriptional activation of IFN genes. Binds to host RNase L thereby preventing its activation by 2'-5' oligoadenylates in order to counteract the antiviral interferon-inducible OAS/RNase L pathway. Forms an icosahedral capsid of pseudo T=3 symmetry with capsid proteins VP2 and VP3. Together they form an icosahedral capsid composed of 60 copies of each VP1, VP2, and VP3, with a diameter of approximately 300 Angstroms. VP4 lies on the inner surface of the protein shell formed by VP1, VP2 and VP3. All the three latter proteins contain a beta-sheet structure called beta-barrel jelly roll. VP1 is situated at the 12 fivefold axes, whereas VP2 and VP3 are located at the quasi-sixfold axes. Its function is as follows. Lies on the inner surface of the capsid shell. After binding to the host receptor, the capsid undergoes conformational changes. Capsid protein VP4 is released, capsid protein VP1 N-terminus is externalized, and together, they shape a pore in the host membrane through which the viral genome is translocated into the host cell cytoplasm. After genome has been released, the channel shrinks. Functionally, VP0 precursor is a component of immature procapsids. In terms of biological role, involved in host translation shutoff by inhibiting cap-dependent mRNA translation. Nuclear localization is required for this function. The resulting inhibition of cellular protein synthesis serves to ensure maximal viral gene expression and to evade host immune response. Inhibits the phosphorylation of the leader protein. Affects membrane integrity and causes an increase in membrane permeability. Its function is as follows. Associates with and induces structural rearrangements of intracellular membranes. It displays RNA-binding, nucleotide binding and NTPase activities. Functionally, serves as membrane anchor via its hydrophobic domain. In terms of biological role, forms a primer, VPg-pU, which is utilized by the polymerase for the initiation of RNA chains. Cysteine protease that generates mature viral proteins from the precursor polyprotein. In addition to its proteolytic activity, it binds to viral RNA, and thus influences viral genome replication. RNA and substrate cooperatively bind to the protease. Cleaves host PABP1, this cleavage is important for viral replication. Its function is as follows. Replicates the genomic and antigenomic RNAs by recognizing replications specific signals. Performs VPg uridylylation. This Theiler's murine encephalomyelitis virus (strain DA) (TMEV) protein is Genome polyprotein.